We begin with the raw amino-acid sequence, 294 residues long: Phosphatidylserine decarboxylase proenzyme (294 aa).

Residues D100, H157, and S261 each act as charge relay system; for autoendoproteolytic cleavage activity in the active site. The active-site Schiff-base intermediate with substrate; via pyruvic acid; for decarboxylase activity is S261. S261 carries the post-translational modification Pyruvic acid (Ser); by autocatalysis.

Belongs to the phosphatidylserine decarboxylase family. PSD-B subfamily. Prokaryotic type I sub-subfamily. In terms of assembly, heterodimer of a large membrane-associated beta subunit and a small pyruvoyl-containing alpha subunit. It depends on pyruvate as a cofactor. Post-translationally, is synthesized initially as an inactive proenzyme. Formation of the active enzyme involves a self-maturation process in which the active site pyruvoyl group is generated from an internal serine residue via an autocatalytic post-translational modification. Two non-identical subunits are generated from the proenzyme in this reaction, and the pyruvate is formed at the N-terminus of the alpha chain, which is derived from the carboxyl end of the proenzyme. The autoendoproteolytic cleavage occurs by a canonical serine protease mechanism, in which the side chain hydroxyl group of the serine supplies its oxygen atom to form the C-terminus of the beta chain, while the remainder of the serine residue undergoes an oxidative deamination to produce ammonia and the pyruvoyl prosthetic group on the alpha chain. During this reaction, the Ser that is part of the protease active site of the proenzyme becomes the pyruvoyl prosthetic group, which constitutes an essential element of the active site of the mature decarboxylase.

The protein localises to the cell membrane. The enzyme catalyses a 1,2-diacyl-sn-glycero-3-phospho-L-serine + H(+) = a 1,2-diacyl-sn-glycero-3-phosphoethanolamine + CO2. Its pathway is phospholipid metabolism; phosphatidylethanolamine biosynthesis; phosphatidylethanolamine from CDP-diacylglycerol: step 2/2. In terms of biological role, catalyzes the formation of phosphatidylethanolamine (PtdEtn) from phosphatidylserine (PtdSer). The polypeptide is Phosphatidylserine decarboxylase proenzyme (Mannheimia succiniciproducens (strain KCTC 0769BP / MBEL55E)).